The sequence spans 1043 residues: NACHT, LRR and PYD domains-containing protein 13 (1043 aa).

The region spanning 1–107 (MNFSVITCPN…CEKVRAEMKE (107 aa)) is the Pyrin domain. In terms of domain architecture, NACHT spans 229-558 (QTIVLVGRAG…VLEEPREFPP (330 aa)). 235 to 242 (GRAGVGKT) serves as a coordination point for ATP. LRR repeat units lie at residues 725–749 (NENL…LCLA), 781–804 (NSKL…ILKA), 837–864 (IQHV…ALTH), 894–917 (NRSL…FLCE), 923–946 (DGNL…ELAN), 951–978 (NHNV…ALKP), and 1007–1030 (SKSL…MLCK).

It belongs to the NLRP family.

Its function is as follows. Involved in inflammation. The protein is NACHT, LRR and PYD domains-containing protein 13 (NLRP13) of Homo sapiens (Human).